A 420-amino-acid chain; its full sequence is Histidine--tRNA ligase (420 aa).

Belongs to the class-II aminoacyl-tRNA synthetase family. As to quaternary structure, homodimer.

It localises to the cytoplasm. The catalysed reaction is tRNA(His) + L-histidine + ATP = L-histidyl-tRNA(His) + AMP + diphosphate + H(+). The chain is Histidine--tRNA ligase from Anaplasma phagocytophilum (strain HZ).